We begin with the raw amino-acid sequence, 119 residues long: Large ribosomal subunit protein bL20 (119 aa).

The protein belongs to the bacterial ribosomal protein bL20 family.

Binds directly to 23S ribosomal RNA and is necessary for the in vitro assembly process of the 50S ribosomal subunit. It is not involved in the protein synthesizing functions of that subunit. The polypeptide is Large ribosomal subunit protein bL20 (Afipia carboxidovorans (strain ATCC 49405 / DSM 1227 / KCTC 32145 / OM5) (Oligotropha carboxidovorans)).